Here is a 655-residue protein sequence, read N- to C-terminus: MKTLLLLLIIITMPVLAQDSIVFGVHSKTAPLEWRNNGVDQGFNIELMDRIGQLTNKRIIVRRKSFQQLVKDVHDPDSDIDVIAVVSPVNMDRKLAQSDPIYATHAKAYTLQGKALINNWADLVGKRVAIKNGAFVDVFLSDHLQNFDRVDVDLYETGFQLLIKNQVDVVIAESFVARRLLPLYPSVRSSSDALIYGAFNFVANETKTELMYQINEALRQLKLSGEYDKLVNKWFGTGREKVDLTSSEKRMFALAILVAIMSAIGMIFTGFISASLRRHTKALDAELIQRKRIEVEISELSQQFQSVLDGLPNGVTIVNQELQHLWSNDNNIHLLDSDEFYYVDNNVFKLKAAVLEVLSTQKSFTADMRYQQQFWQLQIHPIANNQVVILLEESTEQHRLRQANEEASRLASLGELSAGIAHEINNPTGLIVHAVSLFTAAMKDLTPAAKHYQKQNPFWLIAGLNPDIAIEELQYSCGSIEEGAKRISRIVNDLKRYAMPHIADQYTLVSLNDVVQVAQRLTANQTKSHQISTMLCDPSPCITGDAQQLHQVLINLIQNACNACSTQPGIIVIDTHVANNMAILSIKDNGCGMDSATLKRITEPFFTTRRNEGGSGLGLSVCSKIIKEHQGEMQIQSTLGKGTQIRLIFALAQQD.

Positions 1–17 (MKTLLLLLIIITMPVLA) are cleaved as a signal peptide. Residues 252-272 (FALAILVAIMSAIGMIFTGFI) traverse the membrane as a helical segment. The Histidine kinase domain maps to 419-653 (GIAHEINNPT…QIRLIFALAQ (235 aa)). Residue histidine 422 is modified to Phosphohistidine; by autocatalysis.

The protein resides in the cell membrane. The catalysed reaction is ATP + protein L-histidine = ADP + protein N-phospho-L-histidine.. In Shewanella frigidimarina (strain NCIMB 400), this protein is Putative sensor protein Sfri_3689.